Here is a 440-residue protein sequence, read N- to C-terminus: Ankyrin repeat and MYND domain-containing protein 2 (440 aa).

3 ANK repeats span residues 45–74 (NGMT…DASC), 79–108 (HGYT…ETDV), and 159–188 (KLAG…NPLL). Zn(2+)-binding residues include C320, C323, C332, C335, C341, C345, H353, and C357. Residues 320–357 (CTTCGEKGASKRCSVCKMVIYCDQTCQKTHWFAHKKMC) form an MYND-type zinc finger. A compositionally biased stretch (basic and acidic residues) spans 371 to 381 (AAKHKRQEEKN). The interval 371-440 (AAKHKRQEEK…APTGPQLSEE (70 aa)) is disordered.

Interacts with the retinal-specific guanylyl cyclase GC1.

The protein resides in the cell projection. Its subcellular location is the cilium. Its function is as follows. May be involved in the trafficking of signaling proteins to the cilia. In Mus musculus (Mouse), this protein is Ankyrin repeat and MYND domain-containing protein 2 (Ankmy2).